The chain runs to 399 residues: Phosphoglycerate kinase (399 aa).

Residues 24–26, R39, 62–65, R121, and R154 contribute to the substrate site; these read DYN and HLGR. Residues K204, G295, E326, and 355–358 contribute to the ATP site; that span reads GGDS.

It belongs to the phosphoglycerate kinase family. Monomer.

It localises to the cytoplasm. It carries out the reaction (2R)-3-phosphoglycerate + ATP = (2R)-3-phospho-glyceroyl phosphate + ADP. Its pathway is carbohydrate degradation; glycolysis; pyruvate from D-glyceraldehyde 3-phosphate: step 2/5. The sequence is that of Phosphoglycerate kinase from Elusimicrobium minutum (strain Pei191).